A 357-amino-acid polypeptide reads, in one-letter code: Chorismate synthase (357 aa).

Position 46 (Arg-46) interacts with NADP(+). Residues Arg-123–Ser-125, Asn-235–Ala-236, Gly-275, Lys-290–Ser-294, and Arg-316 contribute to the FMN site.

The protein belongs to the chorismate synthase family. As to quaternary structure, homotetramer. The cofactor is FMNH2.

The enzyme catalyses 5-O-(1-carboxyvinyl)-3-phosphoshikimate = chorismate + phosphate. The protein operates within metabolic intermediate biosynthesis; chorismate biosynthesis; chorismate from D-erythrose 4-phosphate and phosphoenolpyruvate: step 7/7. Catalyzes the anti-1,4-elimination of the C-3 phosphate and the C-6 proR hydrogen from 5-enolpyruvylshikimate-3-phosphate (EPSP) to yield chorismate, which is the branch point compound that serves as the starting substrate for the three terminal pathways of aromatic amino acid biosynthesis. This reaction introduces a second double bond into the aromatic ring system. In Nitratiruptor sp. (strain SB155-2), this protein is Chorismate synthase.